The sequence spans 308 residues: ATP synthase gamma chain (308 aa).

Belongs to the ATPase gamma chain family. In terms of assembly, F-type ATPases have 2 components, CF(1) - the catalytic core - and CF(0) - the membrane proton channel. CF(1) has five subunits: alpha(3), beta(3), gamma(1), delta(1), epsilon(1). CF(0) has three main subunits: a, b and c.

Its subcellular location is the cell membrane. Produces ATP from ADP in the presence of a proton gradient across the membrane. The gamma chain is believed to be important in regulating ATPase activity and the flow of protons through the CF(0) complex. The sequence is that of ATP synthase gamma chain from Lacticaseibacillus paracasei (strain ATCC 334 / BCRC 17002 / CCUG 31169 / CIP 107868 / KCTC 3260 / NRRL B-441) (Lactobacillus paracasei).